The sequence spans 120 residues: Photosystem II extrinsic protein U (120 aa).

The signal sequence occupies residues 1-29; sequence MKRLLSLLTGVLVMTGLLMALIFPQSAYA.

This sequence belongs to the PsbU family. In terms of assembly, PSII is composed of 1 copy each of membrane proteins PsbA, PsbB, PsbC, PsbD, PsbE, PsbF, PsbH, PsbI, PsbJ, PsbK, PsbL, PsbM, PsbT, PsbX, PsbY, Psb30/Ycf12, peripheral proteins PsbO, CyanoQ (PsbQ), PsbU, PsbV and a large number of cofactors. It forms dimeric complexes.

The protein localises to the cellular thylakoid membrane. Its function is as follows. One of the extrinsic, lumenal subunits of photosystem II (PSII). PSII is a light-driven water plastoquinone oxidoreductase, using light energy to abstract electrons from H(2)O, generating a proton gradient subsequently used for ATP formation. The extrinsic proteins stabilize the structure of photosystem II oxygen-evolving complex (OEC), the ion environment of oxygen evolution and protect the OEC against heat-induced inactivation. This is Photosystem II extrinsic protein U from Prochlorococcus marinus (strain MIT 9313).